An 871-amino-acid chain; its full sequence is Alanine--tRNA ligase (871 aa).

Residues H561, H565, C662, and H666 each contribute to the Zn(2+) site.

This sequence belongs to the class-II aminoacyl-tRNA synthetase family. The cofactor is Zn(2+).

The protein resides in the cytoplasm. It catalyses the reaction tRNA(Ala) + L-alanine + ATP = L-alanyl-tRNA(Ala) + AMP + diphosphate. Its function is as follows. Catalyzes the attachment of alanine to tRNA(Ala) in a two-step reaction: alanine is first activated by ATP to form Ala-AMP and then transferred to the acceptor end of tRNA(Ala). Also edits incorrectly charged Ser-tRNA(Ala) and Gly-tRNA(Ala) via its editing domain. This Dechloromonas aromatica (strain RCB) protein is Alanine--tRNA ligase.